Here is a 593-residue protein sequence, read N- to C-terminus: MNQDAVAKALLGMAEALRTQDPPKLKMAIKCARSTLSMEISDEMKAICNLQLGKLLFFYTDNFELAKNHLQCAYDKMSAMGTFYTRDKMNAISMLADLHIHYQQWPLTSIKATIRHEITTTRGFPALSNKLMFQLIELMKIDKDVEGAIEMCQLAINSSHADPKMELYFRIAKTLVTYQLMHEEPDISDVTRIGSMIKVMENSTTSDKAHLECIKDFYVCTKLAYMFYEGKSRTSRQLLRQIQKSQTSGETKIHGIRWLGEPSITLLACVMNQICALVQSNTDRVEKYYHLVIKHADEIIFKSTRSPQEPGVVRCINMIKMTTLEMMACCNVLACRPQKTLHNVRDMLEWSNRTSGPLLTRYFTPHIHYILGLQCCYFRQHENAENHFRAAMKKLHKEDITAHNTMALLNLNLAITYLNQLKMADYYEVSENLTAPKISSCSQMLKNNVKLLSAFFAYITNKLNECKLLSHEVLDDSKAEDFFRLHGLGLLLLSLVTDVDEKGVRPTVDWSKKSHDHVVILFSHSLYEKILLAAGYDPKSELMKMVVSEQLASRRMLSVENLTPLVANMPASKLLQWFDGDPFKLLPRDETVL.

The protein belongs to the SCC4/mau-2 family. May heterodimerize with scc-2/SCC2 to form the cohesin loading complex.

Its subcellular location is the nucleus. The protein resides in the nucleoplasm. It localises to the cytoplasm. In terms of biological role, plays an important role in the loading of the cohesin complex on to DNA. Forms a heterodimeric complex (also known as cohesin loading complex) with scc-2/SCC2 which mediates the loading of the cohesin complex onto chromatin. Required for normal development until the fourth larval stage. Functions cell autonomously to guide migrations during the development of the nervous system. Participates in the guidance of mechanosensory neuron AVM by a slt-1-independent mechanism. Regulates chromosome segregation in early embryos. The protein is Maternal uncoordinated protein 2 of Caenorhabditis elegans.